The following is a 278-amino-acid chain: Envelope glycoprotein L (278 aa).

The signal sequence occupies residues 1-30 (MCRRPDCGFSFSPGPVILLWCCLLLPIVSS). Residues 43–256 (VPAECPELTR…DKYYAGLPPE (214 aa)) form the gL betaherpesvirus-type domain. An intrachain disulfide couples cysteine 154 to cysteine 159.

This sequence belongs to the herpesviridae glycoprotein L (gL) family. Betaherpesvirinae gL subfamily. Interacts with glycoprotein H (gH); this interaction is necessary for the correct processing and cell surface expression of gH. Forms the envelope pentamer complex (PC) composed of gH, gL, UL128, UL130, and UL131A. The pentamer interacts with host NRP2. Forms the envelope trimer complex composed of gH, gL, and gO. The trimer interacts with host PDGFRA. The trimer also interacts with host EPHA2.

The protein localises to the virion membrane. It is found in the host cell membrane. Its subcellular location is the host Golgi apparatus. It localises to the host trans-Golgi network. Its function is as follows. The heterodimer glycoprotein H-glycoprotein L is required for the fusion of viral and plasma membranes leading to virus entry into the host cell. Acts as a functional inhibitor of gH and maintains gH in an inhibited form. Upon binding to host integrins, gL dissociates from gH leading to activation of the viral fusion glycoproteins gB and gH. In human cytomegalovirus, forms two distincts complexes to mediate viral entry, a trimer and a pentamer at the surface of the virion envelope. The gH-gL-gO trimer is required for infection in fibroblasts by interacting with host PDGFRA, and in glioblastoma cells by interacting with host EPHA2. The gH-gL-UL128-UL130-UL131A pentamer is essential for viral entry in epithelial, endothelial and myeloid cells via interaction with host NRP2. This is Envelope glycoprotein L from Homo sapiens (Human).